The chain runs to 180 residues: UPF0690 protein C1orf52 homolog (180 aa).

2 disordered regions span residues 1 to 66 and 96 to 180; these read MAAE…SVTR and KIWK…KKKK. Basic and acidic residues predominate over residues 48–61; sequence KQAEKRLPGPDELF. Threonine 65 carries the post-translational modification Phosphothreonine. The residue at position 130 (tyrosine 130) is a Phosphotyrosine. A compositionally biased stretch (acidic residues) spans 149-160; the sequence is EGEETVESDDDK. Position 156 is a phosphoserine (serine 156). Residues 161-180 are compositionally biased toward basic and acidic residues; the sequence is DERASKIRRVEPGEAAKKKK.

Belongs to the UPF0690 family.

The sequence is that of UPF0690 protein C1orf52 homolog from Mus musculus (Mouse).